The chain runs to 305 residues: MGSNVYGILTMVMIAEFVFGNMSNGFIVLINCIDWVRKGTLSSIGWILLFLAISRMVLIWEMLITWIKYMKYSFSFVTGTELRGIMFTWVISNHFSLWLATILSIFYLLKIASFSKPVFLYLKWREKKVLLIVLLGNLIFLMLNILQINKHIEHWMYQYERNITWSSRVSDFAGFSNLVLLEMIVFSVTPFTVALVSFILLIFSLWKHLQKMHLNSRGERDPSTKAHVNALRIMVSFLLLYATYFISFFLSLIPMAHKTRLGLMFSITVGLFYPSSHSFILILGHSNLRQASLWVMTYLKCGQKH.

The Extracellular segment spans residues 1-7 (MGSNVYG). The helical transmembrane segment at 8 to 28 (ILTMVMIAEFVFGNMSNGFIV) threads the bilayer. At 29–43 (LINCIDWVRKGTLSS) the chain is on the cytoplasmic side. Residues 44-64 (IGWILLFLAISRMVLIWEMLI) traverse the membrane as a helical segment. Topologically, residues 65–88 (TWIKYMKYSFSFVTGTELRGIMFT) are extracellular. A helical transmembrane segment spans residues 89–109 (WVISNHFSLWLATILSIFYLL). The Cytoplasmic portion of the chain corresponds to 110 to 128 (KIASFSKPVFLYLKWREKK). Residues 129-149 (VLLIVLLGNLIFLMLNILQIN) form a helical membrane-spanning segment. At 150–182 (KHIEHWMYQYERNITWSSRVSDFAGFSNLVLLE) the chain is on the extracellular side. The N-linked (GlcNAc...) asparagine glycan is linked to asparagine 162. Residues 183-203 (MIVFSVTPFTVALVSFILLIF) form a helical membrane-spanning segment. Residues 204–232 (SLWKHLQKMHLNSRGERDPSTKAHVNALR) lie on the Cytoplasmic side of the membrane. Residues 233 to 253 (IMVSFLLLYATYFISFFLSLI) form a helical membrane-spanning segment. The Extracellular segment spans residues 254–262 (PMAHKTRLG). A helical membrane pass occupies residues 263–283 (LMFSITVGLFYPSSHSFILIL). At 284 to 305 (GHSNLRQASLWVMTYLKCGQKH) the chain is on the cytoplasmic side.

This sequence belongs to the G-protein coupled receptor T2R family.

Its subcellular location is the cell membrane. In terms of biological role, receptor that may play a role in the perception of bitterness and is gustducin-linked. May play a role in sensing the chemical composition of the gastrointestinal content. The activity of this receptor may stimulate alpha gustducin, mediate PLC-beta-2 activation and lead to the gating of TRPM5. The sequence is that of Taste receptor type 2 member 13 from Mus musculus (Mouse).